The following is a 159-amino-acid chain: Small ribosomal subunit protein uS9 (159 aa).

Belongs to the universal ribosomal protein uS9 family.

The chain is Small ribosomal subunit protein uS9 from Rickettsia rickettsii (strain Iowa).